The sequence spans 118 residues: Basic phospholipase A2 PA-12C (118 aa).

7 disulfide bridges follow: C11–C71, C27–C117, C29–C45, C44–C98, C51–C91, C60–C84, and C78–C89. 3 residues coordinate Ca(2+): Y28, G30, and G32. Residue H48 is part of the active site. D49 contributes to the Ca(2+) binding site. The active site involves D92.

This sequence belongs to the phospholipase A2 family. Group I subfamily. D49 sub-subfamily. Ca(2+) is required as a cofactor. In terms of tissue distribution, expressed by the venom gland.

It is found in the secreted. It carries out the reaction a 1,2-diacyl-sn-glycero-3-phosphocholine + H2O = a 1-acyl-sn-glycero-3-phosphocholine + a fatty acid + H(+). Functionally, PLA2 catalyzes the calcium-dependent hydrolysis of the 2-acyl groups in 3-sn-phosphoglycerides. This is Basic phospholipase A2 PA-12C from Pseudechis australis (Mulga snake).